Here is a 1202-residue protein sequence, read N- to C-terminus: Probable DNA polymerase (1202 aa).

Belongs to the DNA polymerase type-B family.

The protein localises to the mitochondrion. It catalyses the reaction DNA(n) + a 2'-deoxyribonucleoside 5'-triphosphate = DNA(n+1) + diphosphate. The sequence is that of Probable DNA polymerase from Ascobolus immersus.